A 240-amino-acid chain; its full sequence is MQDPNADTEWNDILRKKGILPPKESLKELEEEEAEKEEQLLQQSVVKTYEDMTLEELEENEDEFSEEDERAIEMYRQQRLAEWKATQLKNKFGEVLEISGKDYVQEVTKAGEGLWVILHLYKQGIPLCSLINHHLSGLARKFPDVKFIKAISTTCIPNYPDRNLPTVFVYREGDIKAQFIGPLVFGGMNLTIDELEWKLSESGAIKTALEENPKKPIQDLLLSSVRGPVPMRRDSDSEDD.

Met1 is subject to N-acetylmethionine. The Phosducin domain occupies 27–181 (KELEEEEAEK…EGDIKAQFIG (155 aa)). Ser44, Ser65, Ser235, and Ser237 each carry phosphoserine. Residues 92–240 (FGEVLEISGK…MRRDSDSEDD (149 aa)) are thioredoxin fold.

Belongs to the phosducin family. In terms of assembly, interacts (via thioredoxin fold region) with KDR/VEGFR2 (via juxtamembrane domain). Forms ternary complexes with the chaperonin CCT complex and actin substrate, leading to inhibition of actin folding. Interacts with XIAP (via BIR 3 and RING domain). Interacts with HSP90AA1 and HSP90AB1. In terms of processing, N-terminal methionine acetylation destabilizes the protein. In terms of tissue distribution, expressed in blood vessels (at protein level).

It localises to the cytoplasm. The protein resides in the perinuclear region. Its subcellular location is the endoplasmic reticulum. Its function is as follows. Acts as a chaperone for the angiogenic VEGF receptor KDR/VEGFR2, increasing its abundance by inhibiting its ubiquitination and degradation. Inhibits the folding activity of the chaperonin-containing T-complex (CCT) which leads to inhibition of cytoskeletal actin folding. Acts as a chaperone during heat shock alongside HSP90 and HSP40/70 chaperone complexes. Modulates the activation of caspases during apoptosis. The polypeptide is Phosducin-like protein 3 (Pdcl3) (Mus musculus (Mouse)).